The sequence spans 420 residues: MEFPEHGVRLLGRLRQQRELGFLCDCTVLVGDARFPAHRAVLAACSVYFHLFYRDQPASSRDTVRLNGDIVTVPAFSRLLDFMYEGRLDLHNLPVEDVLAAASYLHMYDIVKVCKGRLRKKDPDLETRTLGTELPGQPPHPLPSWSPAFCQAAPKAKHPSLGVKATHPLPTFGPPSWQVAEQSSGALDLSLKPSPRPEQVHPPCRLQTSLCSSVQQVAQPLVKAEQDSFSEQDSSSPQSADRSPPPVCASAAQGLAVDLEPLHIEGTGSQQLGLPAEPVLDSEELGPSRHLCICPLCCKLFPSTHALQLHLSAHFRERDSVRARLSPEGSVPTCPLCSKTFSCTYTLKRHERTHSGEKPYTCVQCGKSFQYSHNLSRHAVVHTREKPHACRWCERRFTQSGDLYRHVRKFHYGLVKPLLV.

A BTB domain is found at 24-92 (CDCTVLVGDA…MYEGRLDLHN (69 aa)). 2 disordered regions span residues 127–204 (TRTL…HPPC) and 222–247 (VKAE…PPPV). The span at 227–241 (DSFSEQDSSSPQSAD) shows a compositional bias: low complexity. 4 consecutive C2H2-type zinc fingers follow at residues 292-314 (CICP…LSAH), 332-354 (PTCP…ERTH), 360-382 (YTCV…AVVH), and 388-411 (HACR…RKFH).

Belongs to the krueppel C2H2-type zinc-finger protein family. ZBTB18 subfamily. Highly expressed in skeletal muscle and ovary (at protein level). Low expression in brain, lung, spleen, liver and heart (at protein level). Not detected in kidney and intestines (at protein level). Also observed in testis and, at lower levels, in stomach and nervous system.

It is found in the cytoplasm. The protein resides in the nucleus. The protein localises to the nucleoplasm. Functionally, transcriptional repressor. Specifically binds DNA and probably acts by recruiting chromatin remodeling multiprotein complexes. This Mus musculus (Mouse) protein is Zinc finger and BTB domain-containing protein 42 (Zbtb42).